The chain runs to 201 residues: MNETNYNDIDQLIYLFSKLPGLGIRSARRIALYLLQDKDVRLKSLINNLVEIDKKIVKCEICGNMDTENICRICSSEYRDKSIIAIVETVAELWAMERSGNFKGLYHVLGHNLSAASRQNPSILRLPELLTRCFAENIKEVIIATNSTLEGQTTAYFITEYLKEHPAKISRLASGIPIGGELDYLDEGTVSAAINLRQPFE.

The C4-type zinc-finger motif lies at 59–74 (CEICGNMDTENICRIC). The Toprim domain maps to 82 to 177 (SIIAIVETVA…KISRLASGIP (96 aa)).

It belongs to the RecR family.

Functionally, may play a role in DNA repair. It seems to be involved in an RecBC-independent recombinational process of DNA repair. It may act with RecF and RecO. The polypeptide is Recombination protein RecR (Rickettsia rickettsii (strain Iowa)).